Here is a 353-residue protein sequence, read N- to C-terminus: T-complex protein 1 subunit eta (353 aa).

It belongs to the TCP-1 chaperonin family. Heterooligomeric complex of about 850 to 900 kDa that forms two stacked rings, 12 to 16 nm in diameter.

The protein localises to the cytoplasm. In terms of biological role, molecular chaperone; assists the folding of proteins upon ATP hydrolysis. Known to play a role, in vitro, in the folding of actin and tubulin. The polypeptide is T-complex protein 1 subunit eta (Tetrahymena thermophila).